The sequence spans 552 residues: CTP synthase (552 aa).

Positions 1-270 (MTKYVFVTGG…DRIICEELKL (270 aa)) are amidoligase domain. Serine 13 lines the CTP pocket. Serine 13 contributes to the UTP binding site. ATP is bound by residues 14 to 19 (SLGKGI) and aspartate 71. Residues aspartate 71 and glutamate 144 each coordinate Mg(2+). Residues 151 to 153 (DIE), 191 to 196 (KTKPTQ), and lysine 227 each bind CTP. Residues 191–196 (KTKPTQ) and lysine 227 contribute to the UTP site. One can recognise a Glutamine amidotransferase type-1 domain in the interval 295–547 (TIGMVGKYVD…VEAALANKQA (253 aa)). Glycine 356 lines the L-glutamine pocket. Cysteine 383 acts as the Nucleophile; for glutamine hydrolysis in catalysis. Residues 384–387 (LGMQ), glutamate 407, and arginine 473 contribute to the L-glutamine site. Catalysis depends on residues histidine 520 and glutamate 522.

Belongs to the CTP synthase family. Homotetramer.

It carries out the reaction UTP + L-glutamine + ATP + H2O = CTP + L-glutamate + ADP + phosphate + 2 H(+). It catalyses the reaction L-glutamine + H2O = L-glutamate + NH4(+). The enzyme catalyses UTP + NH4(+) + ATP = CTP + ADP + phosphate + 2 H(+). Its pathway is pyrimidine metabolism; CTP biosynthesis via de novo pathway; CTP from UDP: step 2/2. With respect to regulation, allosterically activated by GTP, when glutamine is the substrate; GTP has no effect on the reaction when ammonia is the substrate. The allosteric effector GTP functions by stabilizing the protein conformation that binds the tetrahedral intermediate(s) formed during glutamine hydrolysis. Inhibited by the product CTP, via allosteric rather than competitive inhibition. Functionally, catalyzes the ATP-dependent amination of UTP to CTP with either L-glutamine or ammonia as the source of nitrogen. Regulates intracellular CTP levels through interactions with the four ribonucleotide triphosphates. The protein is CTP synthase of Burkholderia cenocepacia (strain HI2424).